Consider the following 338-residue polypeptide: Glycerol-1-phosphate dehydrogenase [NAD(P)+] (338 aa).

NAD(+)-binding positions include 81 to 85 (GRPLD) and 103 to 106 (TSAS). Asp-108 serves as a coordination point for substrate. An NAD(+)-binding site is contributed by Ser-112. Asp-157 contributes to the substrate binding site. Residues Asp-157 and His-238 each coordinate Zn(2+). Residue His-242 coordinates substrate. Residue His-256 coordinates Zn(2+).

The protein belongs to the glycerol-1-phosphate dehydrogenase family. Homodimer. The cofactor is Zn(2+).

Its subcellular location is the cytoplasm. It carries out the reaction sn-glycerol 1-phosphate + NAD(+) = dihydroxyacetone phosphate + NADH + H(+). The catalysed reaction is sn-glycerol 1-phosphate + NADP(+) = dihydroxyacetone phosphate + NADPH + H(+). It participates in membrane lipid metabolism; glycerophospholipid metabolism. In terms of biological role, catalyzes the NAD(P)H-dependent reduction of dihydroxyacetonephosphate (DHAP or glycerone phosphate) to glycerol 1-phosphate (G1P). The G1P thus generated is used as the glycerophosphate backbone of phospholipids in the cellular membranes of Archaea. The polypeptide is Glycerol-1-phosphate dehydrogenase [NAD(P)+] (Pyrobaculum calidifontis (strain DSM 21063 / JCM 11548 / VA1)).